The following is a 347-amino-acid chain: UDP-N-acetylenolpyruvoylglucosamine reductase (347 aa).

Residues 27 to 197 (LPARAQRLAR…TGIELRLNKM (171 aa)) form the FAD-binding PCMH-type domain. The active site involves arginine 173. Residue serine 247 is the Proton donor of the active site. The active site involves glutamate 342.

It belongs to the MurB family. FAD serves as cofactor.

The protein localises to the cytoplasm. It carries out the reaction UDP-N-acetyl-alpha-D-muramate + NADP(+) = UDP-N-acetyl-3-O-(1-carboxyvinyl)-alpha-D-glucosamine + NADPH + H(+). Its pathway is cell wall biogenesis; peptidoglycan biosynthesis. Functionally, cell wall formation. This is UDP-N-acetylenolpyruvoylglucosamine reductase from Alcanivorax borkumensis (strain ATCC 700651 / DSM 11573 / NCIMB 13689 / SK2).